Reading from the N-terminus, the 147-residue chain is Deoxyuridine 5'-triphosphate nucleotidohydrolase (147 aa).

8 residues coordinate dUMP: S69, G82, D85, Y88, K93, R137, F142, and G143.

This sequence belongs to the dUTPase family. Homotrimer. Requires Mg(2+) as cofactor.

It catalyses the reaction dUTP + H2O = dUMP + diphosphate + H(+). The protein operates within pyrimidine metabolism; dUMP biosynthesis; dUMP from dCTP (dUTP route): step 2/2. Involved in nucleotide metabolism via production of dUMP, the immediate precursor of thymidine nucleotides, and decreases the intracellular concentration of dUTP so that uracil cannot be incorporated into DNA. Shows a significant activity against dITP, another potentially mutagenic nucleotide. In Saccharomyces cerevisiae (strain ATCC 204508 / S288c) (Baker's yeast), this protein is Deoxyuridine 5'-triphosphate nucleotidohydrolase.